Consider the following 256-residue polypeptide: Thiazole synthase (256 aa).

The active-site Schiff-base intermediate with DXP is the lysine 96. 1-deoxy-D-xylulose 5-phosphate is bound by residues glycine 157, alanine 184 to glycine 185, and asparagine 206 to threonine 207.

This sequence belongs to the ThiG family. Homotetramer. Forms heterodimers with either ThiH or ThiS.

The protein resides in the cytoplasm. It catalyses the reaction [ThiS sulfur-carrier protein]-C-terminal-Gly-aminoethanethioate + 2-iminoacetate + 1-deoxy-D-xylulose 5-phosphate = [ThiS sulfur-carrier protein]-C-terminal Gly-Gly + 2-[(2R,5Z)-2-carboxy-4-methylthiazol-5(2H)-ylidene]ethyl phosphate + 2 H2O + H(+). It participates in cofactor biosynthesis; thiamine diphosphate biosynthesis. Its function is as follows. Catalyzes the rearrangement of 1-deoxy-D-xylulose 5-phosphate (DXP) to produce the thiazole phosphate moiety of thiamine. Sulfur is provided by the thiocarboxylate moiety of the carrier protein ThiS. In vitro, sulfur can be provided by H(2)S. The polypeptide is Thiazole synthase (Brucella canis (strain ATCC 23365 / NCTC 10854 / RM-666)).